The chain runs to 633 residues: tRNA uridine 5-carboxymethylaminomethyl modification enzyme MnmG (633 aa).

13-18 is an FAD binding site; the sequence is GGGHAG. 273-287 is a binding site for NAD(+); that stretch reads GPRYCPSIEDKINRF.

It belongs to the MnmG family. Homodimer. Heterotetramer of two MnmE and two MnmG subunits. It depends on FAD as a cofactor.

Its subcellular location is the cytoplasm. NAD-binding protein involved in the addition of a carboxymethylaminomethyl (cmnm) group at the wobble position (U34) of certain tRNAs, forming tRNA-cmnm(5)s(2)U34. The sequence is that of tRNA uridine 5-carboxymethylaminomethyl modification enzyme MnmG from Pseudoalteromonas atlantica (strain T6c / ATCC BAA-1087).